Consider the following 165-residue polypeptide: Zinc finger C2H2 protein ECU11_0990 (165 aa).

Basic and acidic residues-rich tracts occupy residues 1-10 and 19-32; these read MEAESPKERV and DPER…DTSS. The tract at residues 1–38 is disordered; sequence MEAESPKERVQGVSGESWDPERGVKEREDTSSKKGKGV. C2H2-type zinc fingers lie at residues 103–125 and 136–158; these read FGCE…KAQH and LFCP…SRYH.

In Encephalitozoon cuniculi (strain GB-M1) (Microsporidian parasite), this protein is Zinc finger C2H2 protein ECU11_0990.